Consider the following 50-residue polypeptide: uncharacterized protein (50 aa).

This is an uncharacterized protein from Sinorhizobium fredii (strain NBRC 101917 / NGR234).